The sequence spans 72 residues: Cold shock-like protein CspD (72 aa).

The CSD domain occupies 4–64 (GIVKWFNNAK…SDKGSHATKI (61 aa)).

It is found in the cytoplasm. This chain is Cold shock-like protein CspD (cspD), found in Haemophilus influenzae (strain ATCC 51907 / DSM 11121 / KW20 / Rd).